A 449-amino-acid polypeptide reads, in one-letter code: Glutathione reductase (449 aa).

FAD is bound by residues serine 15, glycine 16, glutamate 35, threonine 42, cysteine 43, and lysine 51. Serine 15 contributes to the glutathione binding site. Cysteines 43 and 48 form a disulfide. Position 99 (tyrosine 99) interacts with glutathione. Alanine 115 serves as a coordination point for FAD. Positions 175, 178, 181, 198, 204, and 261 each coordinate NADP(+). Positions 302 and 310 each coordinate FAD. Alanine 340 contributes to the NADP(+) binding site. Histidine 435 is an FAD binding site. The Proton acceptor role is filled by histidine 435.

It belongs to the class-I pyridine nucleotide-disulfide oxidoreductase family. As to quaternary structure, homodimer. The cofactor is FAD.

The protein localises to the cytoplasm. It carries out the reaction 2 glutathione + NADP(+) = glutathione disulfide + NADPH + H(+). The protein operates within xenobiotic degradation; (2,4,5-trichlorophenoxy)acetate degradation. In terms of biological role, catalyzes the reduction of glutathione disulfide (GSSG) to reduced glutathione (GSH). Constitutes the major mechanism to maintain a high GSH:GSSG ratio in the cytosol. This is Glutathione reductase (gor) from Burkholderia cepacia (Pseudomonas cepacia).